The chain runs to 437 residues: Ribosomal protein uS12 methylthiotransferase RimO (437 aa).

One can recognise an MTTase N-terminal domain in the interval 4 to 114 (PRISFVSLGC…VIEAVHTAIP (111 aa)). Cys-13, Cys-49, Cys-78, Cys-145, Cys-149, and Cys-152 together coordinate [4Fe-4S] cluster. The region spanning 131–369 (LTPRHYAYLK…MAKQQQISTH (239 aa)) is the Radical SAM core domain. The 66-residue stretch at 372–437 (KKKIGKRLQV…DAYDLYGIAV (66 aa)) folds into the TRAM domain.

This sequence belongs to the methylthiotransferase family. RimO subfamily. It depends on [4Fe-4S] cluster as a cofactor.

It is found in the cytoplasm. The catalysed reaction is L-aspartate(89)-[ribosomal protein uS12]-hydrogen + (sulfur carrier)-SH + AH2 + 2 S-adenosyl-L-methionine = 3-methylsulfanyl-L-aspartate(89)-[ribosomal protein uS12]-hydrogen + (sulfur carrier)-H + 5'-deoxyadenosine + L-methionine + A + S-adenosyl-L-homocysteine + 2 H(+). Functionally, catalyzes the methylthiolation of an aspartic acid residue of ribosomal protein uS12. This is Ribosomal protein uS12 methylthiotransferase RimO from Bartonella tribocorum (strain CIP 105476 / IBS 506).